Consider the following 478-residue polypeptide: SPbeta prophage-derived uncharacterized protein YonD (478 aa).

A coiled-coil region spans residues 326–419 (IQSQLNQKDE…KFSTEEVQNL (94 aa)).

This is SPbeta prophage-derived uncharacterized protein YonD (yonD) from Bacillus subtilis (strain 168).